The sequence spans 161 residues: Allophycocyanin alpha chain (161 aa).

At Asn71 the chain carries N4-methylasparagine. Position 81 (Cys81) interacts with (2R,3E)-phycocyanobilin.

Belongs to the phycobiliprotein family. Heterodimer of an alpha and a beta chain. Contains one covalently linked phycocyanobilin chromophore.

It is found in the cellular thylakoid membrane. Light-harvesting photosynthetic bile pigment-protein from the phycobiliprotein complex. Allophycocyanin has a maximum absorption at approximately 650 nanometers. In Thermosynechococcus vestitus (strain NIES-2133 / IAM M-273 / BP-1), this protein is Allophycocyanin alpha chain (apcA).